We begin with the raw amino-acid sequence, 979 residues long: Pro-apoptotic serine protease NMA111 (979 aa).

The span at 1–20 (MKRNGESHLNGEAKKSRTEQ) shows a compositional bias: basic and acidic residues. The disordered stretch occupies residues 1-43 (MKRNGESHLNGEAKKSRTEQNQEQQDYQDEYYSSSDEELLPSS). Residues 21 to 34 (NQEQQDYQDEYYSS) show a composition bias toward low complexity. Positions 65-260 (KVVNSVVSIQ…LPVSRPKRAL (196 aa)) are serine protease. Catalysis depends on charge relay system residues His108, Asp139, and Ser222. 2 consecutive PDZ domains span residues 277–362 (EWQL…FVFQ) and 871–943 (PHYG…VSFD).

This sequence belongs to the peptidase S1C family.

The protein resides in the nucleus. Nuclear serine protease which mediates apoptosis. The protein is Pro-apoptotic serine protease NMA111 (NMA111) of Lodderomyces elongisporus (strain ATCC 11503 / CBS 2605 / JCM 1781 / NBRC 1676 / NRRL YB-4239) (Yeast).